The sequence spans 261 residues: Kallikrein 1-related peptidase b3 (261 aa).

Positions 1–18 (MWFLILFLALSLGGIDAA) are cleaved as a signal peptide. Residues 19 to 24 (PPVQSR) constitute a propeptide, activation peptide. Positions 25–107 (IVGGFKCEKN…HPGFNMSLMR (83 aa)) are segment B1. The Peptidase S1 domain occupies 25–258 (IVGGFKCEKN…FTSWIKDTMA (234 aa)). Cystine bridges form between cysteine 31–cysteine 173, cysteine 50–cysteine 66, cysteine 152–cysteine 219, cysteine 184–cysteine 198, and cysteine 209–cysteine 234. Histidine 65 (charge relay system) is an active-site residue. A glycan (N-linked (GlcNAc...) asparagine) is linked at asparagine 102. Residues 112-164 (FLEYDYSNDLMLLRLSKPADITDTVKPITLPTEEPKLGSTCLASGWGSITPTK) form a segment C region. The tract at residues 112–261 (FLEYDYSNDL…WIKDTMAKNP (150 aa)) is segment A. Catalysis depends on aspartate 120, which acts as the Charge relay system. The segment B2 stretch occupies residues 165-261 (FQFTDDLYCV…WIKDTMAKNP (97 aa)). Residue serine 213 is the Charge relay system of the active site. The Zn(2+) site is built by histidine 231 and glutamate 236.

The protein belongs to the peptidase S1 family. Kallikrein subfamily. As to quaternary structure, 7S nerve growth factor is composed of two alpha chains, a beta dimer composed of identical chains, and two gamma chains. The cofactor is Zn(2+).

It carries out the reaction Preferential cleavage of Arg-|-Xaa bonds in small molecule substrates. Highly selective action to release kallidin (lysyl-bradykinin) from kininogen involves hydrolysis of Met-|-Xaa or Leu-|-Xaa.. In terms of biological role, 7S NGF alpha chain stabilizes the 7S complex. The beta dimer promotes neurite growth. The gamma chain is an arginine-specific protease; it may also have plasminogen activator activity, as well as mitogenic activity for chick embryo fibroblasts. In Mus musculus (Mouse), this protein is Kallikrein 1-related peptidase b3 (Klk1b3).